A 190-amino-acid polypeptide reads, in one-letter code: NADH-quinone oxidoreductase subunit B (190 aa).

Positions 39, 40, 104, and 135 each coordinate [4Fe-4S] cluster.

This sequence belongs to the complex I 20 kDa subunit family. In terms of assembly, NDH-1 is composed of 14 different subunits. Subunits NuoB, C, D, E, F, and G constitute the peripheral sector of the complex. It depends on [4Fe-4S] cluster as a cofactor.

The protein localises to the cell inner membrane. It catalyses the reaction a quinone + NADH + 5 H(+)(in) = a quinol + NAD(+) + 4 H(+)(out). In terms of biological role, NDH-1 shuttles electrons from NADH, via FMN and iron-sulfur (Fe-S) centers, to quinones in the respiratory chain. The immediate electron acceptor for the enzyme in this species is believed to be a menaquinone. Couples the redox reaction to proton translocation (for every two electrons transferred, four hydrogen ions are translocated across the cytoplasmic membrane), and thus conserves the redox energy in a proton gradient. The chain is NADH-quinone oxidoreductase subunit B from Prosthecochloris aestuarii (strain DSM 271 / SK 413).